We begin with the raw amino-acid sequence, 496 residues long: Glycine receptor subunit beta (496 aa).

The first 22 residues, 1–22 (MKFSLAVSFFILMSLLFEDACS), serve as a signal peptide directing secretion. At 23-268 (KEKSSKKGKG…IFTLRRQVGF (246 aa)) the chain is on the extracellular side. Asn54 carries N-linked (GlcNAc...) asparagine glycosylation. Residues Arg108 and Ser174 each coordinate glycine. Cys183 and Cys197 are disulfide-bonded. A glycan (N-linked (GlcNAc...) asparagine) is linked at Asn242. Cys243 and Cys255 are oxidised to a cystine. Residue Thr250 coordinates glycine. A helical transmembrane segment spans residues 269–289 (YMMGVYAPTLLIVVLSWLSFW). At 290 to 294 (INPDA) the chain is on the cytoplasmic side. A helical membrane pass occupies residues 295–315 (SAARVPLGIFSVLSLASECTT). The Extracellular segment spans residues 316 to 327 (LAAELPKVSYVK). A helical transmembrane segment spans residues 328–349 (ALDVWLIACLLFGFASLVEYAV). The Cytoplasmic portion of the chain corresponds to 350 to 471 (VQVMLNNPKR…KPVIPTAAKR (122 aa)). Residue Thr391 is modified to Phosphothreonine. A helical transmembrane segment spans residues 472-495 (IDLYARALFPFCFLFFNVIYWSIY). Leu496 is a topological domain (extracellular).

It belongs to the ligand-gated ion channel (TC 1.A.9) family. Glycine receptor (TC 1.A.9.3) subfamily. GLRB sub-subfamily. Forms heteropentamers with glycin receptor alpha subunits. Heteropentamers with GLRA1 can be composed of two GLRA1 and three GLRB subunits, or three GLRA1 and two GLRB subunits, or four GLRA1 subunits and one GLRB subunit. Forms heteropentamers with GLRA2. Functional GLRB-GLRA2 heteropentamers contain four GLRA2 subunits and one GLRB subunit, although alternative subunit composition cannot be excluded. Forms a heteropentamer with GLRA3. Interacts with GPHN. In terms of tissue distribution, detected in spinal cord and brain stem (at protein level). Detected in spinal cord, cerebellum and brain cortex.

It localises to the postsynaptic cell membrane. The protein localises to the cell membrane. It is found in the synapse. The protein resides in the perikaryon. Its subcellular location is the cell projection. It localises to the dendrite. The protein localises to the cytoplasm. The enzyme catalyses chloride(in) = chloride(out). Its activity is regulated as follows. Channel opening is triggered by extracellular glycine. Heteropentameric channels composed of GLRB and GLRA1 are activated by lower glycine levels than homopentameric GLRA1. Its function is as follows. Subunit of heteromeric glycine-gated chloride channels. Plays an important role in the down-regulation of neuronal excitability. Contributes to the generation of inhibitory postsynaptic currents. This Rattus norvegicus (Rat) protein is Glycine receptor subunit beta (Glrb).